The sequence spans 637 residues: Chaperone protein HtpG (637 aa).

The tract at residues 1–338 (MMELKMHNVK…SPDLPLNISR (338 aa)) is a; substrate-binding. Residues 339-558 (ETLQNNRVVE…EGAMDLRMER (220 aa)) are b. The interval 493-512 (KFSPEEKDKENKSDEERAEG) is disordered. Residues 559–637 (FLREQNQLNY…LNNLLGKVII (79 aa)) form a c region.

Belongs to the heat shock protein 90 family. Homodimer.

It is found in the cytoplasm. Its function is as follows. Molecular chaperone. Has ATPase activity. This chain is Chaperone protein HtpG, found in Wolbachia sp. subsp. Brugia malayi (strain TRS).